Reading from the N-terminus, the 606-residue chain is Ribonucleoprotein PTB-binding 1 (606 aa).

The interval 1–41 (MAADVSVTHRPPLSPKSGAEVEAGDAAERRAPEEELPPLDP) is disordered. Residue A2 is modified to N-acetylalanine. Phosphoserine is present on residues S6 and S14. A Nuclear localization signal motif is present at residues 45 to 60 (RKRLEHTERQFRNRRK). 3 consecutive RRM domains span residues 59–130 (RKIL…LQPT), 132–210 (ALLC…WTDA), and 221–299 (RCLC…FCAP). The interaction with PTBP1 stretch occupies residues 307–395 (LAALIAAQAT…QTQGQKKPGI (89 aa)). The tract at residues 391–474 (KKPGILGDSP…PPAPVGLRGS (84 aa)) is disordered. The span at 453–462 (LGLGPPAAQL) shows a compositional bias: low complexity. T463 carries the post-translational modification Phosphothreonine. Position 474 is a phosphoserine (S474). P488 is modified (phosphothreonine). Residues 519–564 (GLLGLSPGPNGHSHLLKVRAGGGDMQGWEAPAPQRPLTRPALPSVS) form a disordered region. Phosphoserine is present on residues S562 and H567. The interval 579–606 (CPRPSPAQKAAMWASTPRASAATTRTPT) is disordered. Residues 592 to 606 (ASTPRASAATTRTPT) show a composition bias toward low complexity.

In terms of assembly, interacts with PTBP1, RAVER2, VCL and ACTN1. Part of a complex containing RAVER1, VCL and ACTN1.

It is found in the nucleus. It localises to the cytoplasm. Its function is as follows. Cooperates with PTBP1 to modulate regulated alternative splicing events. Promotes exon skipping. Cooperates with PTBP1 to modulate switching between mutually exclusive exons during maturation of the TPM1 pre-mRNA. The protein is Ribonucleoprotein PTB-binding 1 (RAVER1) of Homo sapiens (Human).